The primary structure comprises 236 residues: Chorionic somatomammotropin hormone 1 (236 aa).

The signal sequence occupies residues Met-1–Gly-36. An N-linked (GlcNAc...) asparagine glycan is attached at Asn-89. Disulfide bonds link Cys-98–Cys-214 and Cys-231–Cys-236.

The protein belongs to the somatotropin/prolactin family.

The protein resides in the secreted. The sequence is that of Chorionic somatomammotropin hormone 1 (CSH1) from Bos taurus (Bovine).